Here is a 244-residue protein sequence, read N- to C-terminus: Large ribosomal subunit protein uL3 (244 aa).

It belongs to the universal ribosomal protein uL3 family. In terms of assembly, part of the 50S ribosomal subunit. Forms a cluster with proteins L14 and L19.

Functionally, one of the primary rRNA binding proteins, it binds directly near the 3'-end of the 23S rRNA, where it nucleates assembly of the 50S subunit. The protein is Large ribosomal subunit protein uL3 of Aquifex pyrophilus.